Here is a 126-residue protein sequence, read N- to C-terminus: Histone H2B type 1-H (126 aa).

A compositionally biased stretch (low complexity) spans 1 to 12; that stretch reads MPEPAKSAPAPK. The interval 1-36 is disordered; that stretch reads MPEPAKSAPAPKKGSKKALTKAQKKDGKKRKRSRKE. Pro-2 is modified (N-acetylproline). Glu-3 carries the post-translational modification ADP-ribosyl glutamic acid. The residue at position 6 (Lys-6) is an N6-(2-hydroxyisobutyryl)lysine; alternate. Lys-6 carries the N6-(beta-hydroxybutyryl)lysine; alternate modification. The residue at position 6 (Lys-6) is an N6-acetyllysine; alternate. Lys-6 bears the N6-butyryllysine; alternate mark. Lys-6 is subject to N6-crotonyllysine; alternate. Lys-6 carries the N6-lactoyllysine; alternate modification. A Glycyl lysine isopeptide (Lys-Gly) (interchain with G-Cter in SUMO2); alternate cross-link involves residue Lys-6. Ser-7 bears the ADP-ribosylserine mark. Lys-12 carries the N6-(beta-hydroxybutyryl)lysine; alternate modification. N6-acetyllysine; alternate occurs at positions 12 and 13. An N6-crotonyllysine; alternate mark is found at Lys-12 and Lys-13. The residue at position 12 (Lys-12) is an N6-lactoyllysine; alternate. Lys-13 bears the N6-(2-hydroxyisobutyryl)lysine; alternate mark. Phosphoserine; by STK4/MST1 is present on Ser-15. An N6-acetyllysine; alternate mark is found at Lys-16, Lys-17, Lys-21, and Lys-24. N6-crotonyllysine; alternate is present on residues Lys-16, Lys-17, Lys-21, and Lys-24. An N6-lactoyllysine; alternate mark is found at Lys-16, Lys-17, Lys-21, and Lys-24. Residue Lys-17 is modified to N6-glutaryllysine; alternate. Residues Lys-21 and Lys-24 each carry the N6-(2-hydroxyisobutyryl)lysine; alternate modification. The residue at position 21 (Lys-21) is an N6-(beta-hydroxybutyryl)lysine; alternate. Lys-21 carries the post-translational modification N6-butyryllysine; alternate. Lys-21 is covalently cross-linked (Glycyl lysine isopeptide (Lys-Gly) (interchain with G-Cter in SUMO2); alternate). Lys-25 is modified (N6-(2-hydroxyisobutyryl)lysine). Lys-35 carries the N6-(2-hydroxyisobutyryl)lysine; alternate modification. N6-(beta-hydroxybutyryl)lysine; alternate is present on Lys-35. Lys-35 is modified (N6-crotonyllysine; alternate). The residue at position 35 (Lys-35) is an N6-glutaryllysine; alternate. The residue at position 35 (Lys-35) is an N6-succinyllysine; alternate. Lys-35 participates in a covalent cross-link: Glycyl lysine isopeptide (Lys-Gly) (interchain with G-Cter in ubiquitin); alternate. Glu-36 bears the PolyADP-ribosyl glutamic acid mark. Phosphoserine; by AMPK is present on Ser-37. N6-(2-hydroxyisobutyryl)lysine; alternate is present on residues Lys-44, Lys-47, and Lys-58. Lys-44 bears the N6-lactoyllysine; alternate mark. N6-glutaryllysine; alternate occurs at positions 44 and 47. Lys-47 carries the post-translational modification N6-methyllysine; alternate. Lys-58 carries the N6,N6-dimethyllysine; alternate modification. Arg-80 carries the dimethylated arginine modification. Lys-86 carries the N6-(2-hydroxyisobutyryl)lysine; alternate modification. Lys-86 carries the N6-acetyllysine; alternate modification. Position 86 is an N6-lactoyllysine; alternate (Lys-86). Lys-86 is subject to N6,N6,N6-trimethyllysine; alternate. Omega-N-methylarginine is present on residues Arg-87 and Arg-93. Lys-109 is subject to N6-(2-hydroxyisobutyryl)lysine; alternate. Position 109 is an N6-(beta-hydroxybutyryl)lysine; alternate (Lys-109). Residue Lys-109 is modified to N6-lactoyllysine; alternate. Lys-109 is subject to N6-glutaryllysine; alternate. Residue Lys-109 is modified to N6-methyllysine; alternate. Ser-113 is a glycosylation site (O-linked (GlcNAc) serine). Residue Thr-116 is modified to Phosphothreonine. An N6-(2-hydroxyisobutyryl)lysine; alternate mark is found at Lys-117 and Lys-121. Lys-117 carries the N6-(beta-hydroxybutyryl)lysine; alternate modification. N6-lactoyllysine; alternate occurs at positions 117 and 121. 2 positions are modified to N6-glutaryllysine; alternate: Lys-117 and Lys-121. Residues Lys-117 and Lys-121 each carry the N6-succinyllysine; alternate modification. N6-methylated lysine; alternate is present on Lys-117. A Glycyl lysine isopeptide (Lys-Gly) (interchain with G-Cter in ubiquitin); alternate cross-link involves residue Lys-121.

It belongs to the histone H2B family. In terms of assembly, the nucleosome is a histone octamer containing two molecules each of H2A, H2B, H3 and H4 assembled in one H3-H4 heterotetramer and two H2A-H2B heterodimers. The octamer wraps approximately 147 bp of DNA. Post-translationally, monoubiquitination at Lys-35 (H2BK34Ub) by the MSL1/MSL2 dimer is required for histone H3 'Lys-4' (H3K4me) and 'Lys-79' (H3K79me) methylation and transcription activation at specific gene loci, such as HOXA9 and MEIS1 loci. Similarly, monoubiquitination at Lys-121 (H2BK120Ub) by the RNF20/40 complex gives a specific tag for epigenetic transcriptional activation and is also prerequisite for histone H3 'Lys-4' and 'Lys-79' methylation. It also functions cooperatively with the FACT dimer to stimulate elongation by RNA polymerase II. H2BK120Ub also acts as a regulator of mRNA splicing: deubiquitination by USP49 is required for efficient cotranscriptional splicing of a large set of exons. Phosphorylated on Ser-15 (H2BS14ph) by STK4/MST1 during apoptosis; which facilitates apoptotic chromatin condensation. Also phosphorylated on Ser-15 in response to DNA double strand breaks (DSBs), and in correlation with somatic hypermutation and immunoglobulin class-switch recombination. Phosphorylation at Ser-37 (H2BS36ph) by AMPK in response to stress promotes transcription. In terms of processing, glcNAcylation at Ser-113 promotes monoubiquitination of Lys-121. It fluctuates in response to extracellular glucose, and associates with transcribed genes. Post-translationally, ADP-ribosylated by PARP1 or PARP2 on Ser-7 (H2BS6ADPr) in response to DNA damage. H2BS6ADPr promotes recruitment of CHD1L. Mono-ADP-ribosylated on Glu-3 (H2BE2ADPr) by PARP3 in response to single-strand breaks. Poly ADP-ribosylation on Glu-36 (H2BE35ADPr) by PARP1 regulates adipogenesis: it inhibits phosphorylation at Ser-37 (H2BS36ph), thereby blocking expression of pro-adipogenetic genes. Crotonylation (Kcr) is specifically present in male germ cells and marks testis-specific genes in post-meiotic cells, including X-linked genes that escape sex chromosome inactivation in haploid cells. Crotonylation marks active promoters and enhancers and confers resistance to transcriptional repressors. It is also associated with post-meiotically activated genes on autosomes. In terms of processing, hydroxybutyrylation of histones is induced by starvation. Post-translationally, lactylated in macrophages by EP300/P300 by using lactoyl-CoA directly derived from endogenous or exogenous lactate, leading to stimulates gene transcription.

It localises to the nucleus. The protein resides in the chromosome. Functionally, core component of nucleosome. Nucleosomes wrap and compact DNA into chromatin, limiting DNA accessibility to the cellular machineries which require DNA as a template. Histones thereby play a central role in transcription regulation, DNA repair, DNA replication and chromosomal stability. DNA accessibility is regulated via a complex set of post-translational modifications of histones, also called histone code, and nucleosome remodeling. The sequence is that of Histone H2B type 1-H from Mus musculus (Mouse).